Here is a 1079-residue protein sequence, read N- to C-terminus: MEQQQQKSAVHVSKLFVCTAVDCKDEIEEKFERSYASLQQQIAGLSDKEMHDMLTQFVCKEKQHEEISIGFLYIILTDPAMAPKTYRDITLVSRDGMNVIVANLTLLVAEKYTKLTETARRQLIWVLREFVKHQVLSVENVIWNCLRQAGGGDVSHKNLFLVESLLDIFIEYRAWLETNPFLVQSSVYSFVRLIEDHANPALISLRQKEVKFTISLIRDRFHDIIPLGRDFVRLLQNVARIPEFEQLWRDILYNPKSLHPTFNGIWHLLQIRTSRRFLQCRLLPEMERKLHFLASSVKFGNQKRYQDWFQDKYFATPESHSLRSDLIRFIINVIHPTNDMLCSDIIPRWAIIGWLISSCTNPIASANAKLSLFYDWLFFDPAKDNIMNIEPGILVMYHSIRNHPFVSSTLLDFLCRITKNFYIKNEDKIRLGVYNSLKLILDKQVIPNLHPLFESPKLDRELRNLIRENFREFVSPVSNMPQTMYPATHSIQAPIFKKEADQRITQIENIDVGAGVLAANSSTISLVDDDSKVATIPTESLERETEAVFSDEDGENLGRCTKNEENTDDDDDLPLSKVRLKEKPVPEKVELPEAIAESFEIFVTKRNSFTWEAFLKDFRTLPASTLDETQLNYVISNTVLILRETLPQQNVFSESKTEEKCLAKSISYPLYGLFRFLYENEDKSKKPFQSLLSEICERLSETGYLLLYFMKIHCKLQTRKNAQQSYQFKTTVYRQICEATDGKIASCLVRDLDLLEKENTTIYLWLLPDIYREFKTIAINNTDLLRITLRCVDAKNVRDIMYSIAQGKMTIFKQDGLIECIRESLEYETYEQFCLWQLIQAHDVPLKCIQDILPELEAANHPEALSHLLLLLKNEEPTNEIIRLLLSREAKSRGDPFVTSALRFWCQRCEEKLSEIIASLLTSKYPSSSPNKRKRPSKGSSAASSTPSADHVLNHLEHYRRSCRHGTGTGLYVHDMMQRALQSAYTHSNESTKKQFSDLFALAAEDETTAVGRRGGSGRGRKQPAGKKDSNNHSAGSKKNSDVVKAIYSSDESSSEEDWSKHKITQAAKKRKKAINDSD.

Disordered regions lie at residues 544-574 (ETEA…DDLP), 925-949 (YPSS…TPSA), and 1010-1079 (AVGR…NDSD). A compositionally biased stretch (low complexity) spans 938–949 (KGSSAASSTPSA). A phosphoserine mark is found at serine 1049, serine 1050, serine 1054, and serine 1055. The span at 1062-1073 (HKITQAAKKRKK) shows a compositional bias: basic residues.

This sequence belongs to the Integrator subunit 3 family. In terms of assembly, belongs to the multiprotein complex Integrator, at least composed of IntS1, IntS2, IntS3, IntS4, omd/IntS5, IntS6, defl/IntS7, IntS8, IntS9, IntS10, IntS11, IntS12, asun/IntS13, IntS14 and IntS15. The core complex associates with protein phosphatase 2A subunits mts/PP2A and Pp2A-29B, to form the Integrator-PP2A (INTAC) complex.

It localises to the nucleus. The protein resides in the cytoplasm. Component of the integrator complex, a multiprotein complex that terminates RNA polymerase II (Pol II) transcription in the promoter-proximal region of genes. The integrator complex provides a quality checkpoint during transcription elongation by driving premature transcription termination of transcripts that are unfavorably configured for transcriptional elongation: the complex terminates transcription by (1) catalyzing dephosphorylation of the C-terminal domain (CTD) of Pol II subunit Polr2A/Rbp1 and Spt5, and (2) degrading the exiting nascent RNA transcript via endonuclease activity. The integrator complex is also involved in the 3'-end processing of the U7 snRNA, and also the spliceosomal snRNAs U1, U2, U4 and U5. The protein is Integrator complex subunit 3 homolog (IntS3) of Drosophila mojavensis (Fruit fly).